A 361-amino-acid polypeptide reads, in one-letter code: Zinc transporter ZIP13 (361 aa).

The Lumenal portion of the chain corresponds to 1-6; the sequence is MPGCPC. Residues 7-27 form a helical membrane-spanning segment; it reads PGCGMAGQRLLFLTVLALELL. The Cytoplasmic portion of the chain corresponds to 28–68; that stretch reads ERAGGSQPALRSLGAAAACRLDNKESESWGALLSGERLDTW. The chain crosses the membrane as a helical span at residues 69–89; sequence ICSLLGSLMVGLSGVFPLLVI. The Lumenal portion of the chain corresponds to 90-108; that stretch reads PLEMGTLLQSEAGAWRLRQ. A helical transmembrane segment spans residues 109–129; it reads LLSFALGGLLGNVFLHLLPEA. Topologically, residues 130–150 are cytoplasmic; the sequence is WAYTCNITPGGEGQSLQRQQQ. Residues 151–171 form a helical membrane-spanning segment; the sequence is LGLWVIAGFLTFLALEKMFLN. The Lumenal portion of the chain corresponds to 172-232; it reads SKEDPSQAPS…TIDNFTHGLA (61 aa). Residues 233-253 traverse the membrane as a helical segment; sequence VAASFLVSKKIGLLTTMAILL. The XEXPHE-motif signature appears at 254-259; the sequence is HEIPHE. Residues 254-275 are Cytoplasmic-facing; sequence HEIPHEVGDFAILLRAGFDRWT. Residues 276–296 traverse the membrane as a helical segment; the sequence is AAKLQFSTALGGLLGACFAIC. The Lumenal portion of the chain corresponds to 297–306; sequence TQSPKGVEET. Residues 307–327 form a helical membrane-spanning segment; sequence VVWILPFTSGGFLYIALVNVL. Residues 328 to 339 lie on the Cytoplasmic side of the membrane; it reads PDLLEEDDPWHS. Residues 340–360 traverse the membrane as a helical segment; that stretch reads LQQVLLLCSGVLVMVLLSLFV. Glutamate 361 is a topological domain (lumenal).

The protein belongs to the ZIP transporter (TC 2.A.5) family. In terms of assembly, homodimer. In terms of tissue distribution, highly expressed in some tissues such as bone and eye. Expressed in osteoblasts of tibia and of alveolar bone, in proliferative zone of growth plate, and in odontoblasts on the forming of the dentine of crown in molar tooth. Also expressed fibroblasts in reticular layer of dermis of skin.

The protein localises to the golgi apparatus membrane. The protein resides in the cytoplasmic vesicle membrane. Its subcellular location is the endoplasmic reticulum membrane. It catalyses the reaction Zn(2+)(in) = Zn(2+)(out). In terms of biological role, functions as a zinc transporter transporting Zn(2+) from the Golgi apparatus to the cytosol and thus influences the zinc level at least in areas of the cytosol. May regulate beige adipocyte differentiation. This is Zinc transporter ZIP13 from Mus musculus (Mouse).